We begin with the raw amino-acid sequence, 831 residues long: Protein ADP-ribosyltransferase PARP3 (831 aa).

The tract at residues 1–69 is disordered; sequence MVHETRSRTL…KKLKAEESDL (69 aa). Composition is skewed to basic and acidic residues over residues 15–32 and 43–66; these read EEGK…KEQE and KTAD…KAEE. Residues 49 to 199 enclose the PADR1 zinc-binding domain; sequence EHDGEQEPSK…NKYPKRNLDD (151 aa). Positions 124–168 are zinc ribbon; the sequence is GPLDKCPVCGGQLECKGLKYNCTGTHSEWACCSFSTNNPSRRGGP. Zn(2+) is bound by residues Cys-129, Cys-132, Cys-145, and Cys-155. Residues 200–290 enclose the BRCT domain; the sequence is EGIFSGMMIA…EKQPLAAYDI (91 aa). Residues 338–439 enclose the WGR domain; that stretch reads GGHIYEKDGI…KKFKKKCMKM (102 aa). The PARP alpha-helical domain occupies 466 to 585; it reads HCKLDPSVTF…DINVASRLIG (120 aa). In terms of domain architecture, PARP catalytic spans 594-827; the sequence is DPLSQCYKKL…VKYEEQNMEV (234 aa).

The protein belongs to the ARTD/PARP family.

The protein localises to the nucleus. It carries out the reaction L-aspartyl-[protein] + NAD(+) = 4-O-(ADP-D-ribosyl)-L-aspartyl-[protein] + nicotinamide. The catalysed reaction is L-glutamyl-[protein] + NAD(+) = 5-O-(ADP-D-ribosyl)-L-glutamyl-[protein] + nicotinamide. Functionally, involved in the base excision repair (BER) pathway, by catalyzing the poly(ADP-ribosyl)ation of a limited number of acceptor proteins involved in chromatin architecture and in DNA metabolism. This modification follows DNA damages and appears as an obligatory step in a detection/signaling pathway leading to the reparation of DNA strand breaks. The protein is Protein ADP-ribosyltransferase PARP3 (PARP3) of Oryza sativa subsp. japonica (Rice).